The following is a 440-amino-acid chain: tRNA(Ile)-lysidine synthase (440 aa).

Position 25–30 (25–30) interacts with ATP; sequence SGGVDS.

Belongs to the tRNA(Ile)-lysidine synthase family.

It localises to the cytoplasm. The enzyme catalyses cytidine(34) in tRNA(Ile2) + L-lysine + ATP = lysidine(34) in tRNA(Ile2) + AMP + diphosphate + H(+). Functionally, ligates lysine onto the cytidine present at position 34 of the AUA codon-specific tRNA(Ile) that contains the anticodon CAU, in an ATP-dependent manner. Cytidine is converted to lysidine, thus changing the amino acid specificity of the tRNA from methionine to isoleucine. In Vibrio cholerae serotype O1 (strain ATCC 39541 / Classical Ogawa 395 / O395), this protein is tRNA(Ile)-lysidine synthase.